A 239-amino-acid chain; its full sequence is Protein GrpE (239 aa).

2 disordered regions span residues 1-50 (MIEN…INTE) and 209-239 (MGHG…SEDV). The segment covering 16–30 (VLNQDNAPEDNSSAA) has biased composition (polar residues). The span at 218-239 (EEVEKDTVEEDIDSEENTSEDV) shows a compositional bias: acidic residues.

Belongs to the GrpE family. As to quaternary structure, homodimer.

It localises to the cytoplasm. In terms of biological role, participates actively in the response to hyperosmotic and heat shock by preventing the aggregation of stress-denatured proteins, in association with DnaK and GrpE. It is the nucleotide exchange factor for DnaK and may function as a thermosensor. Unfolded proteins bind initially to DnaJ; upon interaction with the DnaJ-bound protein, DnaK hydrolyzes its bound ATP, resulting in the formation of a stable complex. GrpE releases ADP from DnaK; ATP binding to DnaK triggers the release of the substrate protein, thus completing the reaction cycle. Several rounds of ATP-dependent interactions between DnaJ, DnaK and GrpE are required for fully efficient folding. This chain is Protein GrpE, found in Prochlorococcus marinus (strain MIT 9312).